The primary structure comprises 678 residues: uncharacterized protein (678 aa).

Residues 1 to 26 (MGVHFDDNANTTWEATDPGVSSDCDG) are disordered. The next 9 membrane-spanning stretches (helical) occupy residues 119 to 139 (LLLL…LIYP), 245 to 265 (SFPC…GGCT), 317 to 337 (AAVV…YDSI), 340 to 360 (YWIN…PPLL), 371 to 391 (ELFS…YVVW), 405 to 425 (IAKV…NVTF), 443 to 463 (GALT…VIQA), 475 to 495 (YFKI…LPGL), and 519 to 539 (AYLF…RWDF).

The protein localises to the vacuole membrane. This is an uncharacterized protein from Saccharomyces cerevisiae (strain ATCC 204508 / S288c) (Baker's yeast).